We begin with the raw amino-acid sequence, 339 residues long: Dihydroorotate dehydrogenase (quinone) (339 aa).

FMN contacts are provided by residues 64–68 (AGADK) and Thr-88. Lys-68 serves as a coordination point for substrate. 113–117 (NRNGF) lines the substrate pocket. Residues Asn-141 and Asn-174 each coordinate FMN. Asn-174 is a substrate binding site. The active-site Nucleophile is Ser-177. Asn-179 serves as a coordination point for substrate. 2 residues coordinate FMN: Lys-219 and Thr-247. Residue 248-249 (NT) coordinates substrate. FMN contacts are provided by residues Gly-270, Gly-299, and 320 to 321 (YS).

It belongs to the dihydroorotate dehydrogenase family. Type 2 subfamily. As to quaternary structure, monomer. FMN serves as cofactor.

It is found in the cell membrane. The enzyme catalyses (S)-dihydroorotate + a quinone = orotate + a quinol. It participates in pyrimidine metabolism; UMP biosynthesis via de novo pathway; orotate from (S)-dihydroorotate (quinone route): step 1/1. Catalyzes the conversion of dihydroorotate to orotate with quinone as electron acceptor. The sequence is that of Dihydroorotate dehydrogenase (quinone) (pyrD) from Pasteurella multocida (strain Pm70).